A 417-amino-acid polypeptide reads, in one-letter code: Gamma-glutamyl phosphate reductase (417 aa).

The protein belongs to the gamma-glutamyl phosphate reductase family.

It localises to the cytoplasm. It catalyses the reaction L-glutamate 5-semialdehyde + phosphate + NADP(+) = L-glutamyl 5-phosphate + NADPH + H(+). It functions in the pathway amino-acid biosynthesis; L-proline biosynthesis; L-glutamate 5-semialdehyde from L-glutamate: step 2/2. Functionally, catalyzes the NADPH-dependent reduction of L-glutamate 5-phosphate into L-glutamate 5-semialdehyde and phosphate. The product spontaneously undergoes cyclization to form 1-pyrroline-5-carboxylate. The sequence is that of Gamma-glutamyl phosphate reductase from Escherichia coli O45:K1 (strain S88 / ExPEC).